Consider the following 129-residue polypeptide: Small ribosomal subunit protein uS11 (129 aa).

Belongs to the universal ribosomal protein uS11 family. Part of the 30S ribosomal subunit. Interacts with proteins S7 and S18. Binds to IF-3.

Located on the platform of the 30S subunit, it bridges several disparate RNA helices of the 16S rRNA. Forms part of the Shine-Dalgarno cleft in the 70S ribosome. The sequence is that of Small ribosomal subunit protein uS11 from Bacillus cytotoxicus (strain DSM 22905 / CIP 110041 / 391-98 / NVH 391-98).